Reading from the N-terminus, the 1256-residue chain is Topoisomerase 1-associated factor 1 (1256 aa).

Residues 26–38 (GFIVSDEENDNLE) are compositionally biased toward acidic residues. Disordered stretches follow at residues 26 to 58 (GFIV…VDEY), 695 to 725 (SKKK…RTHA), 1052 to 1121 (SGAE…EAFF), and 1176 to 1256 (SDGV…DEDE). The span at 39–53 (NENRNERDPDSRNQD) shows a compositional bias: basic and acidic residues. Basic residues predominate over residues 1060–1086 (GKARKRGNKSSSTIKKKSLQSRSRRPP). Basic and acidic residues-rich tracts occupy residues 1097–1110 (ELRK…FVHD) and 1179–1190 (VDTHSHQDDKSQ). Positions 1194–1204 (SENEDSSEEVS) are enriched in acidic residues. A compositionally biased stretch (low complexity) spans 1222–1231 (DNNVSENYVS).

This sequence belongs to the timeless family. As to quaternary structure, component of the fork protection complex (FPC) consisting of TOF1 and CSM3.

The protein localises to the nucleus. Forms a fork protection complex (FPC) with CSM3 and which is required for chromosome segregation during meiosis and DNA damage repair. FPC coordinates leading and lagging strand synthesis and moves with the replication fork. FPC stabilizes replication forks in a configuration that is recognized by replication checkpoint sensors. The chain is Topoisomerase 1-associated factor 1 (TOF1) from Scheffersomyces stipitis (strain ATCC 58785 / CBS 6054 / NBRC 10063 / NRRL Y-11545) (Yeast).